We begin with the raw amino-acid sequence, 518 residues long: Probable high-affinity hexose transporter ght7 (518 aa).

Residues 1–27 (MRDFQSRFADRYNQITNSYSYSSSRQG) are Cytoplasmic-facing. The helical transmembrane segment at 28–48 (LITGMVNVGSFFGCLLSSPVA) threads the bilayer. Over 49–54 (DKIGKR) the chain is Extracellular. A helical membrane pass occupies residues 55 to 75 (LSIIVWTTVYLIGIIIQVTTV). The Cytoplasmic segment spans residues 76–77 (PS). A helical membrane pass occupies residues 78 to 98 (WVQILVAKIWTGLSIGALSVI). The Extracellular portion of the chain corresponds to 99 to 112 (TPGYQSEVAPAIMR). A helical membrane pass occupies residues 113–133 (GAIVTTYQLFITLGIFIAACI). Topologically, residues 134–149 (NMGTHKYSHGTTAQWR) are cytoplasmic. The chain crosses the membrane as a helical span at residues 150–170 (ISIGINLLWGIITLVGIIFLP). Topologically, residues 171-236 (ESPRYLIAIG…IFNANIRYRT (66 aa)) are extracellular. The chain crosses the membrane as a helical span at residues 237–257 (FLGMAVMMFQQLTGANYYFYY). Residues 258–271 (GTQVFRGTGMDSPY) lie on the Cytoplasmic side of the membrane. The helical transmembrane segment at 272 to 292 (LAALIPDAVNCGCTFGAIFVL) threads the bilayer. Residues 293–298 (EFFGRR) are Extracellular-facing. Residues 299–319 (SPLIVGGIWQYICFFIYAAVG) traverse the membrane as a helical segment. At 320 to 333 (DRALYHKNGTSNHR) the chain is on the cytoplasmic side. The helical transmembrane segment at 334 to 354 (AGAVMIVFSCLFIFSFSQTWA) threads the bilayer. The Extracellular portion of the chain corresponds to 355–374 (PAAYVIVGESYPVRYRSKCA). Residues 375–395 (AVATSANWFWNFLISFFTPFI) form a helical membrane-spanning segment. At 396–402 (TNSIGFK) the chain is on the cytoplasmic side. Residues 403–423 (YGYIFASCNLTGAAIIFLFVH) traverse the membrane as a helical segment. Over 424-518 (ETKGRTLEEI…IRPDKREPRL (95 aa)) the chain is Extracellular. A compositionally biased stretch (polar residues) spans 477–506 (IENTDNQGDSGSFQTSTPDDSRPEQNQASA). The segment at 477 to 518 (IENTDNQGDSGSFQTSTPDDSRPEQNQASATYIRPDKREPRL) is disordered.

Belongs to the major facilitator superfamily. Sugar transporter (TC 2.A.1.1) family.

Its subcellular location is the membrane. The chain is Probable high-affinity hexose transporter ght7 (ght7) from Schizosaccharomyces pombe (strain 972 / ATCC 24843) (Fission yeast).